Reading from the N-terminus, the 371-residue chain is 3-methyl-D-ornithine--L-lysine ligase (371 aa).

An ATP-binding site is contributed by Lys-18. 19–20 (LQ) serves as a coordination point for L-lysine. Residues Asp-39, 57 to 58 (NI), and 80 to 81 (EN) contribute to the ATP site. Glu-80 is a binding site for L-lysine. Residues 93–277 (EKFSCPVLFD…LIELLFRAFN (185 aa)) enclose the ATP-grasp domain. Residues Lys-112, Lys-139, Ser-146, and 168-171 (EEYV) contribute to the ADP site. D-ornithine-binding positions include 177-179 (SLE) and Asp-233. Mg(2+) is bound by residues Glu-235, Glu-247, and Asp-249. ADP is bound at residue Glu-247. Residues 251–256 (RFPSQT) and Glu-310 contribute to the D-ornithine site. Ser-254 and Glu-310 together coordinate L-lysine.

This sequence belongs to the PylC family. Mg(2+) is required as a cofactor.

It carries out the reaction (3R)-3-methyl-D-ornithine + L-lysine + ATP = (3R)-3-methyl-D-ornithyl-N(6)-L-lysine + ADP + phosphate + H(+). It participates in amino-acid biosynthesis; L-pyrrolysine biosynthesis. In terms of biological role, is required for the biosynthesis of pyrrolysine. Catalyzes the ATP-dependent ligation between (3R)-3-methyl-D-ornithine and L-lysine, leading to (3R)-3-methyl-D-ornithyl-N6-L-lysine. Is also involved in the synthesis of pyrroline-carboxy-lysine (Pcl), a demethylated form of pyrrolysine that is generated by the pyrrolysine biosynthetic enzymes when the growth media is supplemented with D-ornithine. The sequence is that of 3-methyl-D-ornithine--L-lysine ligase from Methanosarcina mazei (strain ATCC BAA-159 / DSM 3647 / Goe1 / Go1 / JCM 11833 / OCM 88) (Methanosarcina frisia).